The chain runs to 79 residues: MTEQLEFFPVQSPCRGICQSDERGFCRGCFRSRDERFNWNKMSDGEKQEVLRLCRQRLMRKLRVNKPAPSDEPEQPSLF.

This is an uncharacterized protein from Escherichia coli O6:H1 (strain CFT073 / ATCC 700928 / UPEC).